Reading from the N-terminus, the 529-residue chain is Polygalacturonase (529 aa).

An N-terminal signal peptide occupies residues Met1–Ala21. The active-site Proton donor is the Asp305. His331 is a catalytic residue. The required for PGA export across the outer membrane and catalytic activity stretch occupies residues Ala516–Ile529.

It belongs to the glycosyl hydrolase 28 family. As to quaternary structure, monomer.

It is found in the secreted. It carries out the reaction (1,4-alpha-D-galacturonosyl)n+m + H2O = (1,4-alpha-D-galacturonosyl)n + (1,4-alpha-D-galacturonosyl)m.. Its function is as follows. Contributes to the wilt disease production on tomato. This chain is Polygalacturonase (pglA), found in Ralstonia solanacearum (Pseudomonas solanacearum).